Here is a 1380-residue protein sequence, read N- to C-terminus: DNA-directed RNA polymerase subunit beta (1380 aa).

The protein belongs to the RNA polymerase beta chain family. In terms of assembly, the RNAP catalytic core consists of 2 alpha, 1 beta, 1 beta' and 1 omega subunit. When a sigma factor is associated with the core the holoenzyme is formed, which can initiate transcription.

The catalysed reaction is RNA(n) + a ribonucleoside 5'-triphosphate = RNA(n+1) + diphosphate. Functionally, DNA-dependent RNA polymerase catalyzes the transcription of DNA into RNA using the four ribonucleoside triphosphates as substrates. The chain is DNA-directed RNA polymerase subunit beta from Ehrlichia ruminantium (strain Welgevonden).